The primary structure comprises 863 residues: Axin-1 (863 aa).

A disordered region spans residues 1–81; the sequence is MNVQEQGFPL…PEGSASPTPP (81 aa). The Tankyrase-binding motif signature appears at 20–29; sequence APRPPVPGEE. Polar residues predominate over residues 34–61; that stretch reads STDSRPVNHSFCSGKGTSIKSETSTATP. Serine 75 is modified (phosphoserine). Serine 77 carries the post-translational modification Phosphoserine; by CK1. An RGS domain is found at 88-211; sequence SLHSLLDDQD…LKSDIYLEYT (124 aa). An interaction with TP53 region spans residues 209–338; it reads EYTRTGSESP…DADTLSLTDS (130 aa). Disordered regions lie at residues 215–240, 249–268, and 315–344; these read SESPKVCSDQSSGSGTGKGMSGYLPT, CDQDADEDDGRDPLPPSRLT, and ATSANDSEQQSLSSDADTLSLTDSSVDGIP. Serine 217 carries the post-translational modification Phosphoserine. Residues 249–258 show a composition bias toward acidic residues; it reads CDQDADEDDG. Residues 325–339 are compositionally biased toward low complexity; sequence SLSSDADTLSLTDSS. The segment at 348–432 is interaction with GSK3B; it reads IRKQHRREMQ…EDGEMPSGPM (85 aa). Residues 353 to 411 form an interaction with SIAH1 region; that stretch reads RREMQESIQVNGRVPLPHIPRTYRMPKEIRVEPQKFAEELIHRLEAVQRTREAEEKLEE. An interaction with beta-catenin region spans residues 433 to 501; the sequence is ASHKLPSVPA…SPDSGHVAKT (69 aa). Serine 468 bears the Phosphoserine; by CK1 mark. Threonine 480 is subject to Phosphothreonine; by GSK3-beta. The residue at position 485 (serine 485) is a Phosphoserine; by GSK3-beta. A phosphoserine mark is found at serine 492 and serine 509. Residues 505–758 form an interaction with RNF111 region; it reads GGTASGHGKH…PVLSVVPAVS (254 aa). The segment covering 529 to 542 has biased composition (basic residues); sequence HHRHVHHHVHHNSA. Disordered regions lie at residues 529–624 and 642–664; these read HHRH…DAEK and HRKAGHGSSGLRKQQAHESSRPL. Residues 543-554 show a composition bias toward basic and acidic residues; that stretch reads RPKEQMEAEVAR. Positions 572 to 790 are interaction with PPP2CA; it reads PRSYSENAGT…CDSIVVAYYF (219 aa). The span at 575–584 shows a compositional bias: polar residues; sequence YSENAGTTLS. The tract at residues 678 to 753 is interaction with HIPK2; it reads AQLRNSVQPS…RPACAPVLSV (76 aa). In terms of domain architecture, DIX spans 781–863; sequence CDSIVVAYYF…KIIGKVEKVD (83 aa). Glycyl lysine isopeptide (Lys-Gly) (interchain with G-Cter in SUMO) cross-links involve residues lysine 858 and lysine 861.

In terms of assembly, homodimer. Component of the beta-catenin destruction complex, containing at least CTNNB1, an axin and GSK3B, that regulates CTNNB1 protein levels through phosphorylation and ubiquitination. Interacts with GSK3B; the interaction hyperphosphorylates CTNNB1 leading to its ubiquitination and destruction. Interacts with DAXX; the interaction stimulates the interaction of DAXX with TP53, stimulates 'Ser-46' phosphorylation of TP53 and induces cell death on UV irradiation. Also interacts with APC, RNF111, SMAD6 and SMAD7. Interacts (via the C-terminal) with PPP1CA; the interaction dephosphorylates AXIN1 and regulates interaction with GSK3B. Interacts with PPP2CA; the interaction dephosphorylates AXIN1. Interacts with MDFI; the interaction decreases AXIN1-mediated JUN N-terminal kinase (JNK) activation. Interacts with MDFIC; the interaction inhibits beta-cateninin-mediated signaling and AXIN1-mediated JUN N-terminal kinase (JNK) activation. Binds ANKRD6, PIAS1, PIAS2, PIAS4, SUMO1, MAP3K1 and MAP3K4. Component of the AXIN1-HIPK2-TP53 complex. Interacts directly in the complex with TP53 and HIPK2. Interacts with DIXDC1; the interaction prevents interaction with MAP3K1. Interacts with AIDA; the interaction blocks the AXIN1-mediated JNK activation through disrupting AXIN1 homodimerization and Wnt signaling. Interacts with LRP5 (via its phosphorylated PPPSP motifs); the interaction is stimulated by WNT1 and GSK3B and activates beta-catenin signaling. Interacts with CTNNB1 (via the armadillo repeats 2-7). Interacts with MACF1. Found in a complex composed of MACF1, APC, AXIN1, CTNNB1 and GSK3B. Interacts with TNKS. Interacts with DAB2; the interaction is mutually exclusive with the AXIN1:PPP1CA interaction. Interacts with ZBED3 (via PPPSP motif); the interaction is direct, enhanced by protein kinase GSK3B and casein kinase CSNK1E activities and decreases GSK3B-induced beta-catenin serine and threonine phosphorylations. Interacts with WDR26. Interacts with GID8. Interacts with SIAH1 and SIAH2; both probably catalyze AXIN1 ubiquitination and subsequent proteasome-mediated ubiquitin-dependent degradation. Interaction with GSK3B and AXIN1 is competitive. Post-translationally, phosphorylation and dephosphorylation of AXIN1 regulates assembly and function of the beta-catenin complex. Phosphorylated by CK1 and GSK3B. Dephosphorylated by PPP1CA and PPP2CA. Phosphorylation by CK1 enhances binding of GSK3B to AXIN1. Also phosphorylated by CDK2 which regulates interaction with CTNBB1. ADP-ribosylated by tankyrase TNKS and TNKS2. Poly-ADP-ribosylated protein is recognized by RNF146, followed by ubiquitination and subsequent activation of the Wnt signaling pathway. In terms of processing, ubiquitinated by RNF146 when poly-ADP-ribosylated, leading to its degradation and subsequent activation of the Wnt signaling pathway. Deubiquitinated by USP34, deubiquitinated downstream of beta-catenin stabilization step: deubiquitination is important for nuclear accumulation during Wnt signaling to positively regulate beta-catenin (CTNBB1)-mediated transcription. Sumoylation at Lys-858 and Lys-861 prevents ubiquitination and degradation. Sumoylation is required for AXIN1-mediated JNK activation. Ubiquitination by SIAH1 and SIAH2 induces its proteasomal degradation as part of the activation of the Wnt signaling pathway. As to expression, expressed in embryonic stem cells.

It localises to the cytoplasm. The protein localises to the nucleus. Its subcellular location is the cell membrane. The protein resides in the membrane. Its function is as follows. Component of the beta-catenin destruction complex required for regulating CTNNB1 levels through phosphorylation and ubiquitination, and modulating Wnt-signaling. Controls dorsoventral patterning via two opposing effects; down-regulates CTNNB1 to inhibit the Wnt signaling pathway and ventralize embryos, but also dorsalizes embryos by activating a Wnt-independent JNK signaling pathway. In Wnt signaling, probably facilitates the phosphorylation of CTNNB1 and APC by GSK3B. Likely to function as a tumor suppressor. Facilitates the phosphorylation of TP53 by HIPK2 upon ultraviolet irradiation. Enhances TGF-beta signaling by recruiting the RNF111 E3 ubiquitin ligase and promoting the degradation of inhibitory SMAD7. Also a component of the AXIN1-HIPK2-TP53 complex which controls cell growth, apoptosis and development. This is Axin-1 (Axin1) from Mus musculus (Mouse).